A 422-amino-acid chain; its full sequence is Adenylosuccinate synthetase (422 aa).

GTP-binding positions include 11–17 (GDEGKGK) and 39–41 (GHT). Residue aspartate 12 is the Proton acceptor of the active site. Mg(2+) is bound by residues aspartate 12 and glycine 39. IMP is bound by residues 12-15 (DEGK), 37-40 (NAGH), threonine 129, arginine 143, asparagine 219, threonine 234, and arginine 298. Catalysis depends on histidine 40, which acts as the Proton donor. 294–300 (VTTGRKR) serves as a coordination point for substrate. Residues arginine 300, 326–328 (KLD), and 411–413 (GTG) each bind GTP.

The protein belongs to the adenylosuccinate synthetase family. Homodimer. Mg(2+) is required as a cofactor.

The protein localises to the cytoplasm. It carries out the reaction IMP + L-aspartate + GTP = N(6)-(1,2-dicarboxyethyl)-AMP + GDP + phosphate + 2 H(+). The protein operates within purine metabolism; AMP biosynthesis via de novo pathway; AMP from IMP: step 1/2. Functionally, plays an important role in the de novo pathway and in the salvage pathway of purine nucleotide biosynthesis. Catalyzes the first committed step in the biosynthesis of AMP from IMP. The protein is Adenylosuccinate synthetase of Talaromyces marneffei (strain ATCC 18224 / CBS 334.59 / QM 7333) (Penicillium marneffei).